The primary structure comprises 344 residues: Heat-inducible transcription repressor HrcA (344 aa).

It belongs to the HrcA family.

Its function is as follows. Negative regulator of class I heat shock genes (grpE-dnaK-dnaJ and groELS operons). Prevents heat-shock induction of these operons. The protein is Heat-inducible transcription repressor HrcA of Geobacillus kaustophilus (strain HTA426).